We begin with the raw amino-acid sequence, 233 residues long: Large ribosomal subunit protein uL1 (233 aa).

The protein belongs to the universal ribosomal protein uL1 family. Part of the 50S ribosomal subunit.

Functionally, binds directly to 23S rRNA. The L1 stalk is quite mobile in the ribosome, and is involved in E site tRNA release. Protein L1 is also a translational repressor protein, it controls the translation of the L11 operon by binding to its mRNA. The polypeptide is Large ribosomal subunit protein uL1 (Aeromonas hydrophila subsp. hydrophila (strain ATCC 7966 / DSM 30187 / BCRC 13018 / CCUG 14551 / JCM 1027 / KCTC 2358 / NCIMB 9240 / NCTC 8049)).